A 283-amino-acid polypeptide reads, in one-letter code: Thymidylate synthase (283 aa).

Arg22 contributes to the dUMP binding site. Cys160 acts as the Nucleophile in catalysis. DUMP is bound by residues Arg180–Asp183, Asn191, and His221–Tyr223. Asp183 is a binding site for (6R)-5,10-methylene-5,6,7,8-tetrahydrofolate. Residue Ser282 participates in (6R)-5,10-methylene-5,6,7,8-tetrahydrofolate binding.

This sequence belongs to the thymidylate synthase family. Bacterial-type ThyA subfamily. In terms of assembly, homodimer.

It is found in the cytoplasm. The catalysed reaction is dUMP + (6R)-5,10-methylene-5,6,7,8-tetrahydrofolate = 7,8-dihydrofolate + dTMP. It participates in pyrimidine metabolism; dTTP biosynthesis. In terms of biological role, catalyzes the reductive methylation of 2'-deoxyuridine-5'-monophosphate (dUMP) to 2'-deoxythymidine-5'-monophosphate (dTMP) while utilizing 5,10-methylenetetrahydrofolate (mTHF) as the methyl donor and reductant in the reaction, yielding dihydrofolate (DHF) as a by-product. This enzymatic reaction provides an intracellular de novo source of dTMP, an essential precursor for DNA biosynthesis. The chain is Thymidylate synthase from Shewanella piezotolerans (strain WP3 / JCM 13877).